A 220-amino-acid polypeptide reads, in one-letter code: Iron-sulfur cluster repair protein YtfE (220 aa).

It belongs to the RIC family. YtfE subfamily. In terms of assembly, homodimer.

Its subcellular location is the cytoplasm. Di-iron-containing protein involved in the repair of iron-sulfur clusters damaged by oxidative and nitrosative stress conditions. This chain is Iron-sulfur cluster repair protein YtfE, found in Escherichia coli (strain SMS-3-5 / SECEC).